Here is a 161-residue protein sequence, read N- to C-terminus: Insulin-like growth factor 1, juvenile form (161 aa).

The tract at residues 45-73 (GPETLCGAELVDTLQFVCGDRGFYFSKPT) is b. 3 cysteine pairs are disulfide-bonded: cysteine 50-cysteine 92, cysteine 62-cysteine 105, and cysteine 91-cysteine 96. A c region spans residues 74–85 (GYGPSSRRSHNR). Residues 86–106 (GIVDECCFQSCELRRLEMYCA) form an a region. A d region spans residues 107–114 (PVKPGKTP). The tract at residues 111 to 161 (GKTPRSVRAQRHTDSPRTAKKPLPGQSHSSYKEVHQKNSSRGNTGGRNYRI) is disordered. The propeptide at 115-161 (RSVRAQRHTDSPRTAKKPLPGQSHSSYKEVHQKNSSRGNTGGRNYRI) is e peptide.

Belongs to the insulin family.

The protein localises to the secreted. Functionally, the insulin-like growth factors, isolated from plasma, are structurally and functionally related to insulin but have a much higher growth-promoting activity. Acts as a ligand for IGF1R. Binds to the alpha subunit of IGF1R, leading to the activation of the intrinsic tyrosine kinase activity which autophosphorylates tyrosine residues in the beta subunit thus initiatiating a cascade of down-stream signaling events leading to activation of the PI3K-AKT/PKB and the Ras-MAPK pathways. Binds to integrins. Its binding to integrins and subsequent ternary complex formation with integrins and IGFR1 are essential for IGF1 signaling. This chain is Insulin-like growth factor 1, juvenile form, found in Cyprinus carpio (Common carp).